The primary structure comprises 237 residues: MIEMLFVKVPNEIDRHVFNFLSSNVSKEKQQAFVRYVNVKDAYRSLLGELLIRKYLIQVLNIPNENILFRKNEYGKPFVDFDIHFNISHSDEWVVCAISNHPVGIDIERISEIDIKIAEQFFHENEYIWLQSKAQNSQVSSFFELWTIKESYIKAIGKGMYIPINSFWIDKNQTQTVIYKQNKKEPVTIYEPELFEGYKCSCCSLFSSVTNLSITKLQVQELCNLFLDSTFSENNNF.

Mg(2+) is bound by residues Asp-106, Glu-108, and Glu-150.

It belongs to the P-Pant transferase superfamily. Gsp/Sfp/HetI/AcpT family. Requires Mg(2+) as cofactor.

It catalyses the reaction apo-[peptidyl-carrier protein] + CoA = holo-[peptidyl-carrier protein] + adenosine 3',5'-bisphosphate + H(+). Functionally, activates the five peptidyl carrier protein (PCP) domains of gramicidin synthase GrsAB, by transferring the 4'-phosphopantetheinyl moiety of coenzyme A (CoA) to a serine residue. Required for gramicidin S production. The chain is 4'-phosphopantetheinyl transferase gsp (gsp) from Aneurinibacillus migulanus (Bacillus migulanus).